A 259-amino-acid polypeptide reads, in one-letter code: Adenosylcobinamide-GDP ribazoletransferase (259 aa).

Helical transmembrane passes span 37–57, 58–78, 118–138, 143–163, 195–215, and 237–257; these read ASRY…LVYS, VMLH…ASVL, ALAL…LALF, VSLA…SFIF, AAIS…LGLL, and LGAT…IVGA.

It belongs to the CobS family. It depends on Mg(2+) as a cofactor.

The protein resides in the cell inner membrane. The enzyme catalyses alpha-ribazole + adenosylcob(III)inamide-GDP = adenosylcob(III)alamin + GMP + H(+). The catalysed reaction is alpha-ribazole 5'-phosphate + adenosylcob(III)inamide-GDP = adenosylcob(III)alamin 5'-phosphate + GMP + H(+). It functions in the pathway cofactor biosynthesis; adenosylcobalamin biosynthesis; adenosylcobalamin from cob(II)yrinate a,c-diamide: step 7/7. Functionally, joins adenosylcobinamide-GDP and alpha-ribazole to generate adenosylcobalamin (Ado-cobalamin). Also synthesizes adenosylcobalamin 5'-phosphate from adenosylcobinamide-GDP and alpha-ribazole 5'-phosphate. The protein is Adenosylcobinamide-GDP ribazoletransferase of Shewanella piezotolerans (strain WP3 / JCM 13877).